The chain runs to 340 residues: Pseudaminic acid synthase (340 aa).

Positions Ser281 to Glu337 constitute an AFP-like domain.

The protein belongs to the pseudaminic acid synthase family. A divalent metal cation is required as a cofactor.

The catalysed reaction is 2,4-diacetamido-2,4,6-trideoxy-beta-L-altrose + phosphoenolpyruvate + H2O = pseudaminate + phosphate. Its function is as follows. Catalyzes the fifth step in the biosynthesis of pseudaminic acid, a sialic-acid-like sugar that is used to modify flagellin. Catalyzes the condensation of phosphoenolpyruvate with 2,4-diacetamido-2,4,6-trideoxy-beta-l-altropyranose, forming pseudaminic acid. This chain is Pseudaminic acid synthase (pseI), found in Helicobacter pylori (strain ATCC 700392 / 26695) (Campylobacter pylori).